The chain runs to 88 residues: uncharacterized protein (88 aa).

As to expression, expressed in a wide variety of tissues.

This is an uncharacterized protein from Homo sapiens (Human).